The primary structure comprises 83 residues: Heterin-1 (83 aa).

An N-terminal signal peptide occupies residues 1–22; sequence MNGKLLLVSLMVTMLVMQPAEA. A propeptide spanning residues 66–83 is cleaved from the precursor; the sequence is VAGQIPFDEFMDILHYRP.

It belongs to the non-disulfide-bridged peptide (NDBP) superfamily. Long chain multifunctional peptide (group 2) family. Expressed by the venom gland.

The protein resides in the secreted. Its subcellular location is the target cell membrane. Functionally, amphipathic peptide with potent activities against both Gram-positive and Gram-negative bacteria. Is the most active against the two Gram-positive Bacillus megaterium and Micrococcus luteus (MIC=4.0 uM for both). It has relatively low hemolytic activity against human erythrocytes. The polypeptide is Heterin-1 (Heterometrus spinifer (Asia giant forest scorpion)).